The chain runs to 394 residues: Na(+)/H(+) antiporter NhaA (394 aa).

11 helical membrane passes run 14–34 (AGGILLLIAALLAMLCANSVF), 59–79 (LLMWINDGFMAVFFILVGMEV), 95–115 (IFPAFAAIGGMVVPALIYWFI), 125–145 (GWAIPMATDIAFALGIVALLS), 155–175 (FLLALAIIDDIGAIIVIALFF), 177–197 (NELSMLALIIASIAIMILITM), 204–224 (GIIHYVIVGTILWASVLKSGV), 258–278 (WCAFAILPLFAFSNAGVSLAG), 292–312 (ITLGLLIGKPVGVFSFCYLAV), 328–348 (VFAIAVLCGIGFTMSVFIAGL), and 362–382 (LSRLGILIGTSIAAIVGYILL).

Belongs to the NhaA Na(+)/H(+) (TC 2.A.33) antiporter family.

It localises to the cell inner membrane. It catalyses the reaction Na(+)(in) + 2 H(+)(out) = Na(+)(out) + 2 H(+)(in). Functionally, na(+)/H(+) antiporter that extrudes sodium in exchange for external protons. The sequence is that of Na(+)/H(+) antiporter NhaA from Haemophilus ducreyi (strain 35000HP / ATCC 700724).